A 395-amino-acid chain; its full sequence is Multidrug resistance protein MdtL (395 aa).

A run of 12 helical transmembrane segments spans residues 4–24 (FLLCSFALVLLYPAGIDMYLV), 42–62 (IAFSVYLAGMATAMLFAGKIA), 69–89 (PVAIVGALVFMMASLLCSRAS), 93–113 (LFLSGRFLQGVGAGGCYVVAF), 131–151 (LLNGITCIVPVLAPVVGHLIM), 158–178 (SLFYTMSAMGIIVGLLSLFIL), 217–237 (VSVILTFVNASPVLLMEVMGF), 247–267 (ALTAGVSMVVSFSTPFALGLF), 271–291 (TLMLVSQGLFLTAGMTLSLAH), 295–315 (VTLFGLTLICAGFSVGFGVAM), 333–353 (LGIAQVCGSSLWIWLAAILGI), and 358–378 (MLIGILIGCSIVSILLIFSVA).

The protein belongs to the major facilitator superfamily. DHA1 family. MdtL (TC 2.A.1.2.22) subfamily.

It is found in the cell inner membrane. The sequence is that of Multidrug resistance protein MdtL from Salmonella heidelberg (strain SL476).